The primary structure comprises 144 residues: Noggin (144 aa).

Positions 1–4 (GGGG) are cleaved as a signal peptide. 4 disulfide bridges follow: Cys67-Cys104, Cys90-Cys140, Cys96-Cys142, and Cys119-Cys127.

The protein belongs to the noggin family. Homodimer. Interacts with GDF5; inhibits chondrocyte differentiation. Prominently expressed in the CNS. High levels found in mitral and tufted cells in the olfactory bulb, piriform cortex of the brain and Purkinje cells in the cerebellum. Low level expression seen in the lung, skeletal muscle and skin.

It is found in the secreted. Its function is as follows. Essential for cartilage morphogenesis and joint formation. Inhibitor of bone morphogenetic proteins (BMP) signaling which is required for growth and patterning of the neural tube and somite. Inhibits chondrocyte differentiation through its interaction with GDF5 and, probably, GDF6. The protein is Noggin (Nog) of Rattus norvegicus (Rat).